A 118-amino-acid chain; its full sequence is Large ribosomal subunit protein uL18 (118 aa).

It belongs to the universal ribosomal protein uL18 family. As to quaternary structure, part of the 50S ribosomal subunit; part of the 5S rRNA/L5/L18/L25 subcomplex. Contacts the 5S and 23S rRNAs.

Its function is as follows. This is one of the proteins that bind and probably mediate the attachment of the 5S RNA into the large ribosomal subunit, where it forms part of the central protuberance. This chain is Large ribosomal subunit protein uL18, found in Helicobacter pylori (strain J99 / ATCC 700824) (Campylobacter pylori J99).